The following is a 227-amino-acid chain: Cytochrome c oxidase subunit 2 (227 aa).

Residues 1 to 14 lie on the Mitochondrial intermembrane side of the membrane; the sequence is MAHPVQLGLQDATS. A helical transmembrane segment spans residues 15 to 45; the sequence is PVMEELITFHDQALMAMFLISFLILYALSST. The Mitochondrial matrix portion of the chain corresponds to 46-59; that stretch reads LTTKLTNTNITDAQ. The chain crosses the membrane as a helical span at residues 60–87; the sequence is EMETIWTILPAVILILIALPSLRILYMT. At 88–227 the chain is on the mitochondrial intermembrane side; that stretch reads DEINNPSFTI…IFEMGPVFTL (140 aa). Histidine 161, cysteine 196, glutamate 198, cysteine 200, histidine 204, and methionine 207 together coordinate Cu cation. Glutamate 198 is a Mg(2+) binding site.

Belongs to the cytochrome c oxidase subunit 2 family. In terms of assembly, component of the cytochrome c oxidase (complex IV, CIV), a multisubunit enzyme composed of 14 subunits. The complex is composed of a catalytic core of 3 subunits MT-CO1, MT-CO2 and MT-CO3, encoded in the mitochondrial DNA, and 11 supernumerary subunits COX4I, COX5A, COX5B, COX6A, COX6B, COX6C, COX7A, COX7B, COX7C, COX8 and NDUFA4, which are encoded in the nuclear genome. The complex exists as a monomer or a dimer and forms supercomplexes (SCs) in the inner mitochondrial membrane with NADH-ubiquinone oxidoreductase (complex I, CI) and ubiquinol-cytochrome c oxidoreductase (cytochrome b-c1 complex, complex III, CIII), resulting in different assemblies (supercomplex SCI(1)III(2)IV(1) and megacomplex MCI(2)III(2)IV(2)). Found in a complex with TMEM177, COA6, COX18, COX20, SCO1 and SCO2. Interacts with TMEM177 in a COX20-dependent manner. Interacts with COX20. Interacts with COX16. Cu cation is required as a cofactor.

It localises to the mitochondrion inner membrane. It catalyses the reaction 4 Fe(II)-[cytochrome c] + O2 + 8 H(+)(in) = 4 Fe(III)-[cytochrome c] + 2 H2O + 4 H(+)(out). In terms of biological role, component of the cytochrome c oxidase, the last enzyme in the mitochondrial electron transport chain which drives oxidative phosphorylation. The respiratory chain contains 3 multisubunit complexes succinate dehydrogenase (complex II, CII), ubiquinol-cytochrome c oxidoreductase (cytochrome b-c1 complex, complex III, CIII) and cytochrome c oxidase (complex IV, CIV), that cooperate to transfer electrons derived from NADH and succinate to molecular oxygen, creating an electrochemical gradient over the inner membrane that drives transmembrane transport and the ATP synthase. Cytochrome c oxidase is the component of the respiratory chain that catalyzes the reduction of oxygen to water. Electrons originating from reduced cytochrome c in the intermembrane space (IMS) are transferred via the dinuclear copper A center (CU(A)) of subunit 2 and heme A of subunit 1 to the active site in subunit 1, a binuclear center (BNC) formed by heme A3 and copper B (CU(B)). The BNC reduces molecular oxygen to 2 water molecules using 4 electrons from cytochrome c in the IMS and 4 protons from the mitochondrial matrix. The protein is Cytochrome c oxidase subunit 2 (MT-CO2) of Papio anubis (Olive baboon).